Consider the following 2293-residue polypeptide: Protein Ycf2 A (2293 aa).

Position 1647-1654 (Gly1647–Ser1654) interacts with ATP.

The protein belongs to the Ycf2 family.

The protein localises to the plastid. The protein resides in the chloroplast stroma. Probable ATPase of unknown function. Its presence in a non-photosynthetic plant (Epifagus virginiana) and experiments in tobacco indicate that it has an essential function which is probably not related to photosynthesis. The polypeptide is Protein Ycf2 A (Crucihimalaya wallichii (Rock-cress)).